The sequence spans 726 residues: Catalase-peroxidase (726 aa).

The interval Met1–Arg25 is disordered. The tryptophyl-tyrosyl-methioninium (Trp-Tyr) (with M-244) cross-link spans Trp96 to Tyr218. The active-site Proton acceptor is the His97. Residues Tyr218–Met244 constitute a cross-link (tryptophyl-tyrosyl-methioninium (Tyr-Met) (with W-96)). His259 provides a ligand contact to heme b.

The protein belongs to the peroxidase family. Peroxidase/catalase subfamily. As to quaternary structure, homodimer or homotetramer. It depends on heme b as a cofactor. Post-translationally, formation of the three residue Trp-Tyr-Met cross-link is important for the catalase, but not the peroxidase activity of the enzyme.

It carries out the reaction H2O2 + AH2 = A + 2 H2O. The enzyme catalyses 2 H2O2 = O2 + 2 H2O. Functionally, bifunctional enzyme with both catalase and broad-spectrum peroxidase activity. This Chelativorans sp. (strain BNC1) protein is Catalase-peroxidase.